The following is a 123-amino-acid chain: Fluoride-specific ion channel FluC (123 aa).

4 helical membrane passes run 1–21, 32–52, 66–86, and 99–119; these read MQWL…GWLA, LGTL…LVWF, FVIT…VEVF, and GLIG…FYFF. Positions 73 and 76 each coordinate Na(+).

This sequence belongs to the fluoride channel Fluc/FEX (TC 1.A.43) family.

Its subcellular location is the cell inner membrane. It carries out the reaction fluoride(in) = fluoride(out). Na(+) is not transported, but it plays an essential structural role and its presence is essential for fluoride channel function. Functionally, fluoride-specific ion channel. Important for reducing fluoride concentration in the cell, thus reducing its toxicity. This is Fluoride-specific ion channel FluC from Psychrobacter cryohalolentis (strain ATCC BAA-1226 / DSM 17306 / VKM B-2378 / K5).